Here is a 5588-residue protein sequence, read N- to C-terminus: Histone-lysine N-methyltransferase 2D (5588 aa).

Positions 1 to 61 (MDSQKPPAED…QKPPHDCSRG (61 aa)) are disordered. The C2HC pre-PHD-type 1; degenerate zinc finger occupies 104 to 149 (GPCEAVLPKEDASQIGFPEGLTPAHLGEPGGHCWAHHWCAAWSAGV). 2 PHD-type zinc fingers span residues 170–218 (QRCS…PEHS) and 270–323 (CPEC…CRLC). Residues 226 to 276 (EARCAVCEGPGQLCDLLFCTSCGHHYHGACLDTALTARKRASWQCPECKVC) form a PHD-type 2; degenerate zinc finger. The segment at 229–274 (CAVCEGPGQLCDLLFCTSCGHHYHGACLDTALTARKRASWQCPECK) adopts an RING-type 1; atypical zinc-finger fold. The RING-type 2; degenerate zinc-finger motif lies at 276–321 (CQSCRKPGNDSKMLVCETCDKGYHTFCLKPPMEDLPAHSWKCKTCR). Disordered regions lie at residues 438-908 (MPLL…SPII) and 922-1315 (LEYP…DDDT). Positions 439–642 (PLLPPPEESP…VSRLSPPPEE (204 aa)) are 15 X 5 AA repeats of S/P-P-P-E/P-E/A. The span at 440 to 463 (LLPPPEESPLSPPPEESPTSPPPE) shows a compositional bias: pro residues. 4 consecutive repeat copies span residues 442 to 446 (PPPEE), 460 to 464 (PPPEA), 469 to 473 (PPTEE), and 477 to 481 (SPPPE). The segment covering 464–475 (ASRLSPPTEESP) has biased composition (low complexity). Composition is skewed to pro residues over residues 490 to 512 (GCPP…PLSP) and 519 to 560 (LSPP…PPPE). 4 repeat units span residues 520–524 (SPPPE), 529–533 (SPPPE), 538–542 (SPPPE), and 547–551 (SPPPE). The span at 561–572 (ASRLFPPFEESP) shows a compositional bias: low complexity. Residues 573–614 (LSPPPEDSPLSPPPEASRLSPPPEDSPMSPPPEDSPMSPPPE) show a composition bias toward pro residues. 4 tandem repeats follow at residues 574 to 578 (SPPPE), 583 to 587 (SPPPE), 592 to 596 (SPPPE), and 610 to 614 (SPPPE). Low complexity predominate over residues 619-636 (LPLPVLSHLSPLPEVSRL). Repeat 15 spans residues 637–641 (SPPPE). Over residues 637 to 677 (SPPPEESPLSPPPEDSPASPPPEASRLSPPPEDSPASPPPE) the composition is skewed to pro residues. Positions 696–712 (DSLVSLPMEESPLSPLP) are enriched in low complexity. The residue at position 727 (S727) is a Phosphoserine. 3 stretches are compositionally biased toward low complexity: residues 735-755 (LCPQ…CLSP), 836-851 (PSQS…FSPS), and 876-893 (LPEE…LSPQ). Pro residues-rich tracts occupy residues 894 to 908 (LMPP…SPII), 959 to 973 (EPVP…PGSP), and 985 to 1012 (LPPP…PPAL). The segment covering 1013–1023 (PLSVPSPLSPV) has biased composition (low complexity). A compositionally biased stretch (basic and acidic residues) spans 1033–1045 (AELHEMETDKGPE). PHD-type zinc fingers lie at residues 1071-1124 (PSPA…PMEV), 1121-1171 (PMEV…SQGD), and 1198-1253 (LGVS…SPAR). Phosphoserine is present on S1107. A compositionally biased stretch (polar residues) spans 1163–1172 (EISNLSQGDA). The RING-type 3; atypical zinc finger occupies 1201-1251 (STDVSPARDEGSLRLCTDSLPETDDSLLCDTGTATSGGKAEGDKGRRRSSP). A Phosphoserine modification is found at S1205. T1223 is subject to Phosphothreonine. A Phosphoserine modification is found at S1226. Residues 1245–1258 (GRRRSSPARSRIKQ) are compositionally biased toward basic residues. S1562 bears the Phosphoserine mark. Disordered regions lie at residues 1566 to 1721 (KRRQ…SKLE), 1751 to 1846 (GRPG…MESK), 1886 to 1962 (GLAL…SLQR), and 2095 to 2641 (SADG…QRQR). Positions 1593 to 1608 (PDDKKDGDLDTDDLLK) are enriched in basic and acidic residues. A Phosphoserine modification is found at S1627. The span at 1631–1641 (ELGKEETEESK) shows a compositional bias: basic and acidic residues. Basic residues-rich tracts occupy residues 1658–1668 (RQRKSHTRVKR) and 1709–1718 (KQQRRARKKS). Residues 1762-1782 (PRADGGSDRKELMTAMHKGDD) are compositionally biased toward basic and acidic residues. A Phosphoserine modification is found at S1791. T1822 is subject to Phosphothreonine. Over residues 1831-1846 (DLDRIPTEELPKMESK) the composition is skewed to basic and acidic residues. Composition is skewed to low complexity over residues 1886-1896 (GLALGSLPSSS) and 1936-1947 (TTPSTPTTPTTE). The span at 2151–2166 (PTYPPYPSPTGAPAQP) shows a compositional bias: pro residues. Residues 2170 to 2181 (GTTTRPGTGQPG) show a composition bias toward low complexity. S2196 is modified (phosphoserine). A Phosphothreonine modification is found at T2197. K2203 is modified (N6-acetyllysine). Phosphoserine is present on residues S2217 and S2231. The span at 2237 to 2249 (ESRKSLEVKKEEL) shows a compositional bias: basic and acidic residues. Phosphoserine occurs at positions 2266, 2268, and 2299. Composition is skewed to pro residues over residues 2308–2322 (EPPP…PPSH) and 2331–2359 (YPDP…PPRS). Residues 2366-2388 (SRVPASPQSQSSSQSPLTPRPLS) show a composition bias toward low complexity. Residues 2470 to 2486 (GQPTNFARSPGTGTFVG) show a composition bias toward polar residues. An Asymmetric dimethylarginine modification is found at R2492. Over residues 2504–2514 (LKPPVPQPGLP) the composition is skewed to pro residues. Residues 2546–2557 (PSGSPLGPNSGP) are compositionally biased toward low complexity. At S2597 the chain carries Phosphoserine. Over residues 2610–2622 (SSSSLATPELSSA) the composition is skewed to low complexity. Residues 2627 to 2665 (ISSLSQTELEKQRQRQRLRELLIRQQIQRNTLRQEKETA) adopt a coiled-coil conformation. The LXXLL motif 1 motif lies at 2644-2648 (LRELL). A disordered region spans residues 2655 to 2806 (RNTLRQEKET…QLWQQQQQQQ (152 aa)). The segment covering 2665-2680 (AAAAAGAVGPPGNWGA) has biased composition (low complexity). Polar residues-rich tracts occupy residues 2691 to 2704 (SRGQ…QDRS) and 2739 to 2748 (PSSMDMNSRQ). The stretch at 2768-2813 (LQQQQQQQQQQQQQQQQQQQQQQQQQQQQQLWQQQQQQQQQQQQQA) forms a coiled coil. Over residues 2769–2806 (QQQQQQQQQQQQQQQQQQQQQQQQQQQQQLWQQQQQQQ) the composition is skewed to low complexity. R2829 carries the post-translational modification Asymmetric dimethylarginine. An LXXLL motif 2 motif is present at residues 3030–3034 (LDDLL). Residues 3069-3104 (NEKAEREALLRGVEPVSLGPEERPPPAPDNSEPRLT) are disordered. The residue at position 3071 (K3071) is an N6-acetyllysine. Residues S3122 and S3193 each carry the phosphoserine modification. Disordered regions lie at residues 3129 to 3193 (NTPK…LNPS) and 3271 to 3326 (QQQQ…QSMV). Positions 3271 to 3284 (QQQQQQQQQQQQQQ) are enriched in low complexity. Residue K3430 is modified to N6-acetyllysine. Disordered stretches follow at residues 3460 to 3496 (SGGS…TFAQ), 3593 to 3617 (RNKQ…VLAV), 3633 to 3661 (LLPA…GGMV), and 3678 to 3704 (QQQQ…NLAL). Residues 3559 to 3613 (EKLKLVTEQQSKIQKQLDQVRKQQKEHTNLMAEYRNKQQQQQQQQQQQQQQQHSA) are a coiled coil. Residues 3596 to 3610 (QQQQQQQQQQQQQQQ) are compositionally biased toward low complexity. The stretch at 3712 to 3747 (RLLQERQLQLQQQRMQLAQKLQQQQQQQQQQQQQQH) forms a coiled coil. R3725 carries the asymmetric dimethylarginine modification. 2 disordered regions span residues 3760–3780 (PGVQ…PSNH) and 3808–3827 (LQQQ…QGPH). Coiled-coil stretches lie at residues 3854 to 3883 (RLLT…QQQQ) and 3912 to 4052 (SLQQ…QVTL). The segment at 4053 to 4249 (GPGLPVKPLQ…QGPPGAGVMP (197 aa)) is disordered. Composition is skewed to low complexity over residues 4128–4159 (SQLL…PQPQ), 4172–4183 (GQQLGSGSSSES), and 4226–4240 (GSQP…QSGQ). Position 4255 is an asymmetric dimethylarginine (R4255). Phosphoserine is present on S4272. The LXXLL motif 3 motif lies at 4279–4283 (LQALL). Positions 4290–4452 (QSQAVRQTPP…SSLVPGHLDQ (163 aa)) are disordered. Over residues 4294–4305 (VRQTPPFQEPGT) the composition is skewed to polar residues. Residues 4307-4322 (PSPLQGLLGCQPQPGG) are compositionally biased toward low complexity. The LXXLL motif 4 signature appears at 4310 to 4314 (LQGLL). The segment covering 4379-4391 (QLPSPSAQLTPTH) has biased composition (polar residues). The residue at position 4410 (S4410) is a Phosphoserine. A compositionally biased stretch (polar residues) spans 4432–4445 (DNLTEAQKPEQSSL). Positions 4514-4518 (LQKLL) match the LXXLL motif 5 motif. An N6-acetyllysine modification is found at K4516. 3 disordered regions span residues 4553–4596 (LQGT…EDGV), 4664–4716 (KNNL…EGAL), and 4729–4778 (AALP…QLGS). A compositionally biased stretch (pro residues) spans 4670–4684 (PPTPPSSLPPTPPPS). Phosphoserine is present on S4789. A Glycyl lysine isopeptide (Lys-Gly) (interchain with G-Cter in SUMO2) cross-link involves residue K4807. An N6-acetyllysine modification is found at K4827. The segment at 4829–4874 (KGSEVSVMLTVSAAAAKNLNGVMVAVAELLSMKIPNSYEVLFPDGP) adopts an RING-type 4; degenerate zinc-finger fold. Residues 4877-4908 (AGLEPKKGEAEGPGGKEKGLSGKGPDTGPDWL) form a disordered region. Residues 4879 to 4896 (LEPKKGEAEGPGGKEKGL) show a composition bias toward basic and acidic residues. Residue K4931 forms a Glycyl lysine isopeptide (Lys-Gly) (interchain with G-Cter in SUMO2) linkage. Residues 4956–5031 (QLSAPPPEEP…SEDSRPPRLK (76 aa)) are disordered. Residues 4959 to 4982 (APPPEEPSPPPSPLAPSPASPPAE) show a composition bias toward pro residues. The span at 5017–5027 (RPPEESEDSRP) shows a compositional bias: basic and acidic residues. An LXXLL motif 6 motif is present at residues 5041–5045 (LRLLL). The C2HC pre-PHD-type 2 zinc-finger motif lies at 5080–5120 (NRRCCFCHEEGDGATDGPARLLNLDLDLWVHLNCALWSTEV). The PHD-type 7 zinc finger occupies 5141-5188 (TKCSLCQRTGATSSCNRMRCPNVYHFACAIRAKCMFFKDKTMLCPVHK). The FYR N-terminal domain maps to 5226-5286 (LHMFRVGGLV…CCYRCSISEN (61 aa)). Residues 5287 to 5372 (NGRPEFVIKV…ESCQNYLFRY (86 aa)) form the FYR C-terminal domain. Residues 5388–5393 (GCARSE) carry the WDR5 interaction motif (WIN) motif. Residues 5448 to 5564 (NNVYLARSRI…KGEELTYDYQ (117 aa)) enclose the SET domain. S-adenosyl-L-methionine contacts are provided by residues Y5502 and 5525–5526 (NH). Positions 5528, 5576, 5578, and 5583 each coordinate Zn(2+). The 17-residue stretch at 5572–5588 (HKIPCHCGAWNCRKWMN) folds into the Post-SET domain.

Belongs to the class V-like SAM-binding methyltransferase superfamily. Histone-lysine methyltransferase family. TRX/MLL subfamily. Component of the MLL2 complex (also named ASCOM complex), at least composed of catalytic subunit KMT2D/MLL2, ASH2L, RBBP5, WDR5, NCOA6, DPY30, KDM6A, PAXIP1/PTIP, PAGR1 and alpha- and beta-tubulin. Forms a core complex with the evolutionary conserved subcomplex WRAD composed of WDR5, RBBP5, ASH2L/ASH2 and DPY30 subunits; WRAD differentially stimulates the methyltransferase activity. Interacts with ESR1; interaction is direct. Interacts (via WIN motif) with WDR5.

Its subcellular location is the nucleus. The catalysed reaction is L-lysyl(4)-[histone H3] + S-adenosyl-L-methionine = N(6)-methyl-L-lysyl(4)-[histone H3] + S-adenosyl-L-homocysteine + H(+). Histone methyltransferase that catalyzes methyl group transfer from S-adenosyl-L-methionine to the epsilon-amino group of 'Lys-4' of histone H3 (H3K4). Part of chromatin remodeling machinery predominantly forms H3K4me1 methylation marks at active chromatin sites where transcription and DNA repair take place. Acts as a coactivator for estrogen receptor by being recruited by ESR1, thereby activating transcription. The polypeptide is Histone-lysine N-methyltransferase 2D (Kmt2d) (Mus musculus (Mouse)).